Reading from the N-terminus, the 203-residue chain is Thymidine kinase (203 aa).

ATP-binding positions include 21–28 and 99–102; these read GCMFAGKT and DEIQ. The active-site Proton acceptor is the Glu-100. Cys-156, Cys-159, Cys-194, and Cys-197 together coordinate Zn(2+).

This sequence belongs to the thymidine kinase family. As to quaternary structure, homotetramer.

It is found in the cytoplasm. It catalyses the reaction thymidine + ATP = dTMP + ADP + H(+). In Mesoplasma florum (strain ATCC 33453 / NBRC 100688 / NCTC 11704 / L1) (Acholeplasma florum), this protein is Thymidine kinase.